Consider the following 1088-residue polypeptide: Adenylate-forming reductase Nps10 (1088 aa).

Residues 1–22 (MSSVSIQIPLPTPPPTQAHNSQ) are disordered. The adenylation (A) domain stretch occupies residues 38 to 451 (FDWHSKNSPN…KIFGRTDDQI (414 aa)). AMP contacts are provided by residues His-261, 357 to 358 (NL), Thr-362, and 443 to 446 (IFGR). Positions 586-668 (AWDSAKTLGF…SLASFVSSVA (83 aa)) constitute a Carrier domain. Residue Ser-621 is modified to O-(pantetheine 4'-phosphoryl)serine. The tract at residues 712–951 (LTGSTGALGS…IPVNVAAAAI (240 aa)) is reductase (R) domain. Residues 716 to 719 (TGAL), 804 to 806 (NAW), Tyr-875, and Lys-879 each bind NADP(+).

It belongs to the adenylate-forming reductase family.

In terms of biological role, adenylate-forming reductase, a natural product biosynthesis enzyme that resembles non-ribosomal peptide synthetases, yet serves to modify one substrate, rather than to condense two or more building blocks. The A-domain preferentially accepts phenylpyruvic acid and benzoic acid as substrate. The natural product of the enzyme is not yet known. The protein is Adenylate-forming reductase Nps10 of Heterobasidion annosum (Root rot fungus).